The following is a 171-amino-acid chain: 3-hydroxydecanoyl-[acyl-carrier-protein] dehydratase (171 aa).

His70 is an active-site residue.

Belongs to the thioester dehydratase family. FabA subfamily. Homodimer.

Its subcellular location is the cytoplasm. It carries out the reaction a (3R)-hydroxyacyl-[ACP] = a (2E)-enoyl-[ACP] + H2O. The enzyme catalyses (3R)-hydroxydecanoyl-[ACP] = (2E)-decenoyl-[ACP] + H2O. The catalysed reaction is (2E)-decenoyl-[ACP] = (3Z)-decenoyl-[ACP]. Its pathway is lipid metabolism; fatty acid biosynthesis. Necessary for the introduction of cis unsaturation into fatty acids. Catalyzes the dehydration of (3R)-3-hydroxydecanoyl-ACP to E-(2)-decenoyl-ACP and then its isomerization to Z-(3)-decenoyl-ACP. Can catalyze the dehydratase reaction for beta-hydroxyacyl-ACPs with saturated chain lengths up to 16:0, being most active on intermediate chain length. This Pseudomonas putida (strain GB-1) protein is 3-hydroxydecanoyl-[acyl-carrier-protein] dehydratase.